Reading from the N-terminus, the 870-residue chain is DNA mismatch repair protein MutS (870 aa).

ATP is bound at residue 620-627 (GPNMAGKS).

It belongs to the DNA mismatch repair MutS family.

In terms of biological role, this protein is involved in the repair of mismatches in DNA. It is possible that it carries out the mismatch recognition step. This protein has a weak ATPase activity. In Syntrophotalea carbinolica (strain DSM 2380 / NBRC 103641 / GraBd1) (Pelobacter carbinolicus), this protein is DNA mismatch repair protein MutS.